The primary structure comprises 268 residues: Protein CONTINUOUS VASCULAR RING 1 (268 aa).

The Cytoplasmic segment spans residues 1–70; sequence MGDEKPVIVM…GWASKKFMTG (70 aa). Residues 21-48 form a disordered region; it reads IPVADSGDKDDGSSSKPSSSSSASSSSH. Residues 34 to 48 show a composition bias toward low complexity; sequence SSKPSSSSSASSSSH. Residues 71–91 traverse the membrane as a helical segment; that stretch reads CVILLPIAITFYITWWFIHFV. The Extracellular segment spans residues 92 to 103; that stretch reads DGFFSPIYAQLG. A helical transmembrane segment spans residues 104–124; it reads INVFGFGFLTSIAFIFLVGVF. Residues 125–268 lie on the Cytoplasmic side of the membrane; it reads MSSWLGASVL…LASIDRATSL (144 aa).

This sequence belongs to the plant COV1 protein family. Mostly expressed in flowers and stems, and, to a lower extent, in roots and leaves.

The protein localises to the membrane. Its function is as follows. Involved in the regulation of vascular patterning in the stem, probably by negatively regulating the differentiation of vascular tissue. In Arabidopsis thaliana (Mouse-ear cress), this protein is Protein CONTINUOUS VASCULAR RING 1.